A 315-amino-acid chain; its full sequence is Ribosomal RNA small subunit methyltransferase H (315 aa).

S-adenosyl-L-methionine is bound by residues 42 to 44, aspartate 59, phenylalanine 96, aspartate 108, and glutamine 115; that span reads GGH.

This sequence belongs to the methyltransferase superfamily. RsmH family.

Its subcellular location is the cytoplasm. The catalysed reaction is cytidine(1402) in 16S rRNA + S-adenosyl-L-methionine = N(4)-methylcytidine(1402) in 16S rRNA + S-adenosyl-L-homocysteine + H(+). Specifically methylates the N4 position of cytidine in position 1402 (C1402) of 16S rRNA. The sequence is that of Ribosomal RNA small subunit methyltransferase H from Gemmatimonas aurantiaca (strain DSM 14586 / JCM 11422 / NBRC 100505 / T-27).